We begin with the raw amino-acid sequence, 202 residues long: Endothelin-1 (202 aa).

A signal peptide spans 1–25 (MDYFPVIFSLLFVAFQGAPETAVLG). Residues 26–50 (AELSPRAEKEVQSPPPSTSWRPRRS) constitute a propeptide that is removed on maturation. A disordered region spans residues 28 to 47 (LSPRAEKEVQSPPPSTSWRP). Intrachain disulfides connect C53–C67 and C55–C63. Positions 74 to 202 (VNTPERVVPY…DQKLIHNRAH (129 aa)) are excised as a propeptide. An endothelin-like region spans residues 110–124 (CQCAHQKDKKCWNFC).

This sequence belongs to the endothelin/sarafotoxin family.

Its subcellular location is the secreted. In terms of biological role, endothelins are endothelium-derived vasoconstrictor peptides. Probable ligand for G-protein coupled receptors EDNRA and EDNRB which activates PTK2B, BCAR1, BCAR3 and, GTPases RAP1 and RHOA cascade in glomerular mesangial cells. Also binds the DEAR/FBXW7-AS1 receptor. Promotes mesenteric arterial wall remodeling via activation of ROCK signaling and subsequent colocalization of NFATC3 with F-actin filaments. NFATC3 then translocates to the nucleus where it subsequently promotes the transcription of the smooth muscle hypertrophy and differentiation marker ACTA2. This is Endothelin-1 (Edn1) from Rattus norvegicus (Rat).